We begin with the raw amino-acid sequence, 228 residues long: PKHD-type hydroxylase RPE_4577 (228 aa).

The 103-residue stretch at 78–180 (TIFPPLFNRY…RIASFFWTQS (103 aa)) folds into the Fe2OG dioxygenase domain. 3 residues coordinate Fe cation: His98, Asp100, and His161. Residue Arg171 participates in 2-oxoglutarate binding.

It depends on Fe(2+) as a cofactor. L-ascorbate serves as cofactor.

The polypeptide is PKHD-type hydroxylase RPE_4577 (Rhodopseudomonas palustris (strain BisA53)).